Consider the following 449-residue polypeptide: GPI mannosyltransferase 2 (449 aa).

Topologically, residues 1-7 (MTEKVTK) are cytoplasmic. A helical membrane pass occupies residues 8–28 (LALASRLIVLLVQLVANGALP). Over 29–82 (EHKPDVFRMPVSSDQNASWIDKVIKRCLGGLRHWDGEYFLHIAENLYSYENTLA) the chain is Lumenal. Residue Asn-44 is glycosylated (N-linked (GlcNAc...) asparagine). Residues 83–103 (FYPLYPVVVRHVGQAVEAIGI) traverse the membrane as a helical segment. The Cytoplasmic portion of the chain corresponds to 104-109 (SLSQES). The helical transmembrane segment at 110-130 (ILLVVAVALNFWLFCESANLL) threads the bilayer. Residues 131 to 148 (FQLTQVLFNDLNKSWNAA) lie on the Lumenal side of the membrane. The N-linked (GlcNAc...) asparagine glycan is linked to Asn-142. A helical transmembrane segment spans residues 149-169 (LIYCFNPATIFFTAAYSETFF). Topologically, residues 170-196 (AYSSLHLMLECSKPTGSFRYLRLGTAL) are cytoplasmic. The chain crosses the membrane as a helical span at residues 197 to 217 (AACLLCRSNGLITLGYPLYFF). At 218–235 (GRQLLLKNKEPNTCMQLT) the chain is on the lumenal side. Residues 236-256 (QMTLTILGAIGILHTYYFYIY) form a helical membrane-spanning segment. Residues 257–368 (RLYCLPNTRP…GFKELIRDHT (112 aa)) are Cytoplasmic-facing. The helical transmembrane segment at 369 to 389 (TFPFVLHAAILTLVCTVYVHI) threads the bilayer. Residues 390–423 (QVSTRLLASATPVFYWFAADHMPKTLAQLKLRSK) lie on the Lumenal side of the membrane. A helical membrane pass occupies residues 424-444 (AGALFVWCTTYSLVGTVLFSN). At 445–449 (NYPWT) the chain is on the cytoplasmic side.

It belongs to the PIGV family.

The protein resides in the endoplasmic reticulum membrane. Its pathway is glycolipid biosynthesis; glycosylphosphatidylinositol-anchor biosynthesis. In terms of biological role, mannosyltransferase involved in glycosylphosphatidylinositol-anchor biosynthesis. Transfers the second mannose to the glycosylphosphatidylinositol during GPI precursor assembly. Required for the GPI-mediated endoplasmic reticulum exit and proper targeting to the cell surface of chp. Required for GPI-mediated membrane attachment of chp, qsm and Cont. Essential for microvillar stability in the rhabdomere. This Drosophila melanogaster (Fruit fly) protein is GPI mannosyltransferase 2.